We begin with the raw amino-acid sequence, 431 residues long: Glutamate-1-semialdehyde 2,1-aminomutase (431 aa).

Residue Lys265 is modified to N6-(pyridoxal phosphate)lysine.

Belongs to the class-III pyridoxal-phosphate-dependent aminotransferase family. HemL subfamily. In terms of assembly, homodimer. Pyridoxal 5'-phosphate is required as a cofactor.

The protein localises to the cytoplasm. It carries out the reaction (S)-4-amino-5-oxopentanoate = 5-aminolevulinate. It participates in porphyrin-containing compound metabolism; protoporphyrin-IX biosynthesis; 5-aminolevulinate from L-glutamyl-tRNA(Glu): step 2/2. In Vibrio parahaemolyticus serotype O3:K6 (strain RIMD 2210633), this protein is Glutamate-1-semialdehyde 2,1-aminomutase.